A 498-amino-acid chain; its full sequence is DNA-directed RNA polymerase subunit Rpo2N (498 aa).

Belongs to the RNA polymerase beta chain family. As to quaternary structure, part of the RNA polymerase complex.

It is found in the cytoplasm. It catalyses the reaction RNA(n) + a ribonucleoside 5'-triphosphate = RNA(n+1) + diphosphate. Its function is as follows. DNA-dependent RNA polymerase (RNAP) catalyzes the transcription of DNA into RNA using the four ribonucleoside triphosphates as substrates. The Rpo2 subunit (Rpo2N and Rpo2C in this organism) is implicated in DNA promoter recognition and in nucleotide binding. This is DNA-directed RNA polymerase subunit Rpo2N from Methanocaldococcus jannaschii (strain ATCC 43067 / DSM 2661 / JAL-1 / JCM 10045 / NBRC 100440) (Methanococcus jannaschii).